Here is a 509-residue protein sequence, read N- to C-terminus: Maturase K (509 aa).

Belongs to the intron maturase 2 family. MatK subfamily.

The protein resides in the plastid. It localises to the chloroplast. Functionally, usually encoded in the trnK tRNA gene intron. Probably assists in splicing its own and other chloroplast group II introns. The polypeptide is Maturase K (Ibicella lutea (Yellow unicorn-plant)).